The primary structure comprises 386 residues: Lycopene beta-cyclase (386 aa).

3-33 (DLILVGGGLANGLIAWRLRQRYPQLNLLLIE) lines the NAD(+) pocket.

This sequence belongs to the lycopene cyclase family. Requires FAD as cofactor.

The catalysed reaction is a carotenoid psi-end group = a carotenoid beta-end derivative. The enzyme catalyses all-trans-lycopene = gamma-carotene. It catalyses the reaction gamma-carotene = all-trans-beta-carotene. The protein operates within carotenoid biosynthesis; beta-carotene biosynthesis. Functionally, catalyzes the double cyclization reaction which converts lycopene to beta-carotene. This chain is Lycopene beta-cyclase, found in Pseudescherichia vulneris (Escherichia vulneris).